Here is a 692-residue protein sequence, read N- to C-terminus: Sulfhydryl oxidase 2 (692 aa).

The signal sequence occupies residues 1–38; it reads MAAARAVARDPGAYARQPPSLRAARLPRLLFLLAVVAA. The 119-residue stretch at 54 to 172 folds into the Thioredoxin domain; that stretch reads SDAVWLLDSG…RQTMIDFLQN (119 aa). A glycan (N-linked (GlcNAc...) asparagine) is linked at Asn71. Catalysis depends on nucleophile residues Cys85 and Cys88. Intrachain disulfides connect Cys85–Cys88 and Cys116–Cys125. N-linked (GlcNAc...) asparagine glycans are attached at residues Asn172, Asn212, and Asn260. A disulfide bond links Cys412 and Cys424. The ERV/ALR sulfhydryl oxidase domain occupies 415–524; that stretch reads SRLELRGYPC…EDPKFPKVPW (110 aa). FAD-binding positions include Arg420, Trp427, His431, Glu472, His476, 499–506, Lys521, and Trp524; that span reads WRKHNMVN. A disulfide bridge connects residues Cys470 and Cys473. Cys530 and Cys533 are oxidised to a cystine. Residues 568 to 607 form a disordered region; that stretch reads DQGSPGEWEAQGREQEEGKGLNPSGKSWRHHDTGSLRPPH. Basic and acidic residues predominate over residues 577–586; sequence AQGREQEEGK. The chain crosses the membrane as a helical span at residues 656 to 676; sequence SLCVVLYVASSLFLMIMYFFF.

The protein belongs to the quiescin-sulfhydryl oxidase (QSOX) family. FAD is required as a cofactor.

It localises to the membrane. The enzyme catalyses 2 R'C(R)SH + O2 = R'C(R)S-S(R)CR' + H2O2. Catalyzes the oxidation of sulfhydryl groups in peptide and protein thiols to disulfides with the reduction of oxygen to hydrogen peroxide. May contribute to disulfide bond formation in a variety of secreted proteins. This is Sulfhydryl oxidase 2 (Qsox2) from Mus musculus (Mouse).